The primary structure comprises 353 residues: Photosystem II protein D1 (353 aa).

T2 is modified (N-acetylthreonine). T2 bears the Phosphothreonine mark. Helical transmembrane passes span 29 to 46, 118 to 133, and 142 to 156; these read YIGW…TATS, HFLL…EWEL, and WIAV…AATA. Residue H118 participates in chlorophyll a binding. Y126 serves as a coordination point for pheophytin a. 2 residues coordinate [CaMn4O5] cluster: D170 and E189. Residues 197–218 form a helical membrane-spanning segment; sequence FHMLGVAGVFGGSLFSAMHGSL. H198 is a chlorophyll a binding site. Residues H215 and 264-265 contribute to the a quinone site; that span reads SF. H215 lines the Fe cation pocket. Residue H272 coordinates Fe cation. The helical transmembrane segment at 274 to 288 threads the bilayer; it reads FLAAWPVVGIWFTAL. Positions 332, 333, 342, and 344 each coordinate [CaMn4O5] cluster. The propeptide occupies 345–353; it reads SVEAPSTNG.

It belongs to the reaction center PufL/M/PsbA/D family. In terms of assembly, PSII is composed of 1 copy each of membrane proteins PsbA, PsbB, PsbC, PsbD, PsbE, PsbF, PsbH, PsbI, PsbJ, PsbK, PsbL, PsbM, PsbT, PsbX, PsbY, PsbZ, Psb30/Ycf12, at least 3 peripheral proteins of the oxygen-evolving complex and a large number of cofactors. It forms dimeric complexes. Requires The D1/D2 heterodimer binds P680, chlorophylls that are the primary electron donor of PSII, and subsequent electron acceptors. It shares a non-heme iron and each subunit binds pheophytin, quinone, additional chlorophylls, carotenoids and lipids. D1 provides most of the ligands for the Mn4-Ca-O5 cluster of the oxygen-evolving complex (OEC). There is also a Cl(-1) ion associated with D1 and D2, which is required for oxygen evolution. The PSII complex binds additional chlorophylls, carotenoids and specific lipids. as cofactor. In terms of processing, tyr-161 forms a radical intermediate that is referred to as redox-active TyrZ, YZ or Y-Z. Post-translationally, C-terminally processed by CTPA; processing is essential to allow assembly of the oxygen-evolving complex and thus photosynthetic growth.

It localises to the plastid. It is found in the chloroplast thylakoid membrane. It catalyses the reaction 2 a plastoquinone + 4 hnu + 2 H2O = 2 a plastoquinol + O2. In terms of biological role, photosystem II (PSII) is a light-driven water:plastoquinone oxidoreductase that uses light energy to abstract electrons from H(2)O, generating O(2) and a proton gradient subsequently used for ATP formation. It consists of a core antenna complex that captures photons, and an electron transfer chain that converts photonic excitation into a charge separation. The D1/D2 (PsbA/PsbD) reaction center heterodimer binds P680, the primary electron donor of PSII as well as several subsequent electron acceptors. The protein is Photosystem II protein D1 of Acorus calamus (Sweet flag).